The primary structure comprises 329 residues: DNA-directed RNA polymerase subunit alpha (329 aa).

Residues 1–233 (MVREKVKVST…NLFIPFLHVE (233 aa)) form an alpha N-terminal domain (alpha-NTD) region. The tract at residues 266–329 (TKELAFQYIF…KKILDILEKK (64 aa)) is alpha C-terminal domain (alpha-CTD).

It belongs to the RNA polymerase alpha chain family. In terms of assembly, in plastids the minimal PEP RNA polymerase catalytic core is composed of four subunits: alpha, beta, beta', and beta''. When a (nuclear-encoded) sigma factor is associated with the core the holoenzyme is formed, which can initiate transcription.

It localises to the plastid. The protein localises to the chloroplast. It carries out the reaction RNA(n) + a ribonucleoside 5'-triphosphate = RNA(n+1) + diphosphate. Functionally, DNA-dependent RNA polymerase catalyzes the transcription of DNA into RNA using the four ribonucleoside triphosphates as substrates. The chain is DNA-directed RNA polymerase subunit alpha from Arabidopsis thaliana (Mouse-ear cress).